Consider the following 329-residue polypeptide: GTPase Obg (329 aa).

Residues 1–159 (MQFIDQARIT…WPLQLELKLL (159 aa)) enclose the Obg domain. In terms of domain architecture, OBG-type G spans 160–328 (AEVGIIGLPN…LLAETWVELG (169 aa)). ATP is bound by residues 166–173 (GLPNAGKS), 191–195 (FTTLV), 213–216 (DIPG), 280–283 (NKQE), and 309–311 (SAA). Mg(2+) is bound by residues Ser-173 and Thr-193.

It belongs to the TRAFAC class OBG-HflX-like GTPase superfamily. OBG GTPase family. As to quaternary structure, monomer. Requires Mg(2+) as cofactor.

It is found in the cytoplasm. In terms of biological role, an essential GTPase which binds GTP, GDP and possibly (p)ppGpp with moderate affinity, with high nucleotide exchange rates and a fairly low GTP hydrolysis rate. Plays a role in control of the cell cycle, stress response, ribosome biogenesis and in those bacteria that undergo differentiation, in morphogenesis control. This Synechococcus sp. (strain CC9605) protein is GTPase Obg.